The following is a 154-amino-acid chain: Endoribonuclease YbeY (154 aa).

Histidine 117, histidine 121, and histidine 127 together coordinate Zn(2+).

The protein belongs to the endoribonuclease YbeY family. It depends on Zn(2+) as a cofactor.

It is found in the cytoplasm. Its function is as follows. Single strand-specific metallo-endoribonuclease involved in late-stage 70S ribosome quality control and in maturation of the 3' terminus of the 16S rRNA. The sequence is that of Endoribonuclease YbeY from Aromatoleum aromaticum (strain DSM 19018 / LMG 30748 / EbN1) (Azoarcus sp. (strain EbN1)).